The following is a 553-amino-acid chain: Muellerian-inhibiting factor (553 aa).

An N-terminal signal peptide occupies residues Met-1–Ala-22. The propeptide occupies Asp-23 to Arg-445. Asn-325 and Asn-409 each carry an N-linked (GlcNAc...) asparagine glycan. Disulfide bonds link Cys-455–Cys-519, Cys-481–Cys-550, and Cys-485–Cys-552.

The protein belongs to the TGF-beta family. Homodimer; disulfide-linked. Preproprotein is proteolytically processed to generate N- and C-terminal cleavage products that homodimerize and associate to form a biologically active non-covalent complex. Binding of the non-covalent complex to AMHR2 induces dissociation of the pro-region from the mature C-terminal dimer. The N-terminal portion of the protein, despite having no intrinsic activity, has the role of amplifying the activity of the C-terminus. Mainly expressed in granulosa cells from preantral and small antral follicles.

The protein localises to the secreted. Functionally, plays an important role in several reproductive functions. Induces Muellerian duct regression during male fetal sexual differentiation and plays a role in Leydig cell differentiation and function. In female acts as a negative regulator of the primordial to primary follicle transition and decreases FSH sensitivity of growing follicles. AMH signals by binding to a specific type-II receptor, AMHR2, that heterodimerizes with type-I receptors (ACVR1 and BMPR1A), and recruiting SMAD proteins that are translocated to the nucleus to regulate target gene expression. This Rattus norvegicus (Rat) protein is Muellerian-inhibiting factor (Amh).